The following is a 106-amino-acid chain: UPF0145 protein CPE0882 (106 aa).

The protein belongs to the UPF0145 family.

The chain is UPF0145 protein CPE0882 from Clostridium perfringens (strain 13 / Type A).